The sequence spans 355 residues: Plasmodial-specific protein LAV1-2 (355 aa).

EF-hand domains lie at 151 to 186 and 217 to 252; these read EDTN…YADT and NDLA…LGFD. Positions 230, 232, 234, 236, 241, 265, 267, 269, 271, 276, 295, 297, 299, 301, 306, 332, 334, 336, 338, and 343 each coordinate Ca(2+). EF-hand domains lie at 282–317 and 319–354; these read LCLL…AHIP and SARK…MFHD.

The sequence is that of Plasmodial-specific protein LAV1-2 from Physarum polycephalum (Slime mold).